The following is a 322-amino-acid chain: Transaldolase (322 aa).

The active-site Schiff-base intermediate with substrate is Lys-136.

The protein belongs to the transaldolase family. Type 1 subfamily. Homodimer.

It is found in the cytoplasm. It carries out the reaction D-sedoheptulose 7-phosphate + D-glyceraldehyde 3-phosphate = D-erythrose 4-phosphate + beta-D-fructose 6-phosphate. It functions in the pathway carbohydrate degradation; pentose phosphate pathway; D-glyceraldehyde 3-phosphate and beta-D-fructose 6-phosphate from D-ribose 5-phosphate and D-xylulose 5-phosphate (non-oxidative stage): step 2/3. In terms of biological role, transaldolase is important for the balance of metabolites in the pentose-phosphate pathway. The protein is Transaldolase of Xanthomonas oryzae pv. oryzae (strain PXO99A).